Here is a 32-residue protein sequence, read N- to C-terminus: Growth hormone-related protein 4 (32 aa).

The cysteines at positions 4 and 11 are disulfide-linked.

This sequence belongs to the somatotropin/prolactin family. Post-translationally, glycosylated. Placental basal zone cells.

The protein localises to the secreted. This Rattus norvegicus (Rat) protein is Growth hormone-related protein 4.